The chain runs to 744 residues: Polyribonucleotide nucleotidyltransferase (744 aa).

Residues Asp-515 and Asp-521 each coordinate Mg(2+). One can recognise a KH domain in the interval 581–640 (PRVITVQVPVDKIGEVIGPKGKMINQIQDDTGADISIEDDGTVFIGATDGPSAEAARQAI). Residues 652–724 (GERFVGTVVK…PRGKLSLHAV (73 aa)) enclose the S1 motif domain.

Belongs to the polyribonucleotide nucleotidyltransferase family. The cofactor is Mg(2+).

It localises to the cytoplasm. The catalysed reaction is RNA(n+1) + phosphate = RNA(n) + a ribonucleoside 5'-diphosphate. In terms of biological role, involved in mRNA degradation. Catalyzes the phosphorolysis of single-stranded polyribonucleotides processively in the 3'- to 5'-direction. The polypeptide is Polyribonucleotide nucleotidyltransferase (Beutenbergia cavernae (strain ATCC BAA-8 / DSM 12333 / CCUG 43141 / JCM 11478 / NBRC 16432 / NCIMB 13614 / HKI 0122)).